Consider the following 319-residue polypeptide: Taste receptor type 2 member 39 (319 aa).

Topologically, residues 1–16 (MAQPSNYWKQDLLPLS) are extracellular. A helical membrane pass occupies residues 17-37 (ILILTLVATECTIGIIASGII). The Cytoplasmic portion of the chain corresponds to 38-56 (TVVNAVSWVQKRAVSITTR). Residues 57–77 (ILLLLSVSRIGLQSIILIEMT) form a helical membrane-spanning segment. Topologically, residues 78-97 (SSIFNFSSYNSVLYRVSRVS) are extracellular. Residue asparagine 82 is glycosylated (N-linked (GlcNAc...) asparagine). The helical transmembrane segment at 98–118 (FVFLNYCSLWFAALLSFFHFV) threads the bilayer. At 119-137 (KIANFSYPLFFKLKWRISE) the chain is on the cytoplasmic side. Residues 138–158 (LMPWLLWLSVFISFSSSMFFC) traverse the membrane as a helical segment. The Extracellular segment spans residues 159-187 (NHKYTVYNNISLSSNICNFTMELYVAEAN). N-linked (GlcNAc...) asparagine glycans are attached at residues asparagine 167 and asparagine 176. Residues 188-208 (VVNVAFLFSFGILPPLTMFIA) traverse the membrane as a helical segment. Over 209–247 (TATLLIFSLRRHTLHMRNGDADSRNPRVEAHKQAIKETS) the chain is Cytoplasmic. Residues 248–268 (CFLFLYILYAAVLFLSTSNIA) traverse the membrane as a helical segment. The Extracellular segment spans residues 269–273 (DASLF). The helical transmembrane segment at 274–294 (WSSVLRISLPVYPAGHSVLLI) threads the bilayer. The Cytoplasmic segment spans residues 295–319 (QSNPGLKRTWKQLLSQIHLHLQSRY).

It belongs to the G-protein coupled receptor T2R family.

The protein localises to the membrane. Its function is as follows. Putative taste receptor which may play a role in the perception of bitterness. This chain is Taste receptor type 2 member 39, found in Rattus norvegicus (Rat).